The primary structure comprises 687 residues: Putative mitochondrial carnitine O-acetyltransferase (687 aa).

Catalysis depends on H346, which acts as the Proton acceptor. Residue 446 to 459 (GASHIKTVFKCSPD) participates in CoA binding. (R)-carnitine is bound by residues Y481 and T494. At S517 the chain carries Phosphoserine.

This sequence belongs to the carnitine/choline acetyltransferase family.

The protein localises to the mitochondrion inner membrane. The catalysed reaction is (R)-carnitine + acetyl-CoA = O-acetyl-(R)-carnitine + CoA. Functionally, involved in the transfer of acetyl-CoA into mitochondria. May also be involved in the metabolism of acetate and of ethanol. In Saccharomyces cerevisiae (strain ATCC 204508 / S288c) (Baker's yeast), this protein is Putative mitochondrial carnitine O-acetyltransferase (YAT1).